A 236-amino-acid polypeptide reads, in one-letter code: Opacity protein opA50 (236 aa).

Ala-1 is a signal peptide.

Belongs to the opacity porin family.

It is found in the cell outer membrane. Functionally, implicated in a number of adherence functions. OPA proteins are implicated in pathogenesis and are subject to phase variation. The protein is Opacity protein opA50 (opaC) of Neisseria gonorrhoeae.